The chain runs to 854 residues: pH-response regulator protein palA/prr-1 (854 aa).

The 398-residue stretch at 5–402 (HVLSLPFRKS…SELESMTSQL (398 aa)) folds into the BRO1 domain. Residues 632–699 (RLDRLYESEL…DAAYYKYKEI (68 aa)) are a coiled coil. Disordered regions lie at residues 739–782 (EEEI…EPIQ) and 801–854 (PQQQ…IRFG). Polar residues predominate over residues 746-759 (PLSSLNMHQSSFSY). A compositionally biased stretch (pro residues) spans 767-782 (QPPPPPPQIPFPEPIQ). Low complexity predominate over residues 827 to 839 (QGQQHQQEQGQPG).

This sequence belongs to the palA/RIM20 family. In terms of assembly, interacts with pacc-1 by binding to its two YPX[LI] motifs.

In terms of biological role, required for the proteolytic cleavage of the transcription factor pacc-1 in response to alkaline ambient pH. May act as a scaffold protein that recruits the calpain-like protease palB/cpr-8 via snf7/vps-3 to its substrate pacc-1. The sequence is that of pH-response regulator protein palA/prr-1 (prr-1) from Neurospora crassa (strain ATCC 24698 / 74-OR23-1A / CBS 708.71 / DSM 1257 / FGSC 987).